Consider the following 635-residue polypeptide: Leucine-rich repeat and fibronectin type-III domain-containing protein 4 (635 aa).

The first 16 residues, 1–16 (MAPPLLLLLLASGAAA), serve as a signal peptide directing secretion. One can recognise an LRRNT domain in the interval 17–48 (CPLPCVCQNLSESLSTLCAHRGLLFVPPNVDR). Residues 17–518 (CPLPCVCQNL…LQAHVLGGTL (502 aa)) lie on the Extracellular side of the membrane. Residues asparagine 25 and asparagine 70 are each glycosylated (N-linked (GlcNAc...) asparagine). LRR repeat units follow at residues 49–70 (RTVE…DFRN), 73–94 (GLVD…AFGD), 97–118 (SLRS…SLRG), 121–142 (NLQH…AFDD), 146–161 (SLED…RQVP), 170–191 (ALHT…AFAQ), and 194–215 (QLSR…PLFS). The 47-residue stretch at 234–280 (NPLHCNCELLWLRRLARPDDLETCASPPGLAGRYFWAVPEGEFSCEP) folds into the LRRCT domain. Residues 281-367 (PLIARHTQRL…GEATARVELR (87 aa)) enclose the Ig-like domain. The cysteines at positions 302 and 351 are disulfide-linked. 4 N-linked (GlcNAc...) asparagine glycosylation sites follow: asparagine 324, asparagine 333, asparagine 376, and asparagine 440. The tract at residues 373 to 410 (HGGNSSAEGGRPGPSDIAASARTAAEGEGTLESEPAVQ) is disordered. In terms of domain architecture, Fibronectin type-III spans 405–502 (SEPAVQVTEV…GCAHFSTLPA (98 aa)). Residues 519-539 (TVAVGGVLVAALLVFTVALLV) traverse the membrane as a helical segment. Topologically, residues 540-635 (RGRGAGNGRL…SAERLEESVV (96 aa)) are cytoplasmic. The tract at residues 555–583 (HVQSQTNGGPSPTPKAHPPRSPPPRPQRS) is disordered. The span at 565–580 (SPTPKAHPPRSPPPRP) shows a compositional bias: pro residues. A phosphoserine mark is found at serine 585 and serine 626. A PDZ-binding motif is present at residues 632–635 (ESVV).

Belongs to the LRFN family. As to quaternary structure, can form heteromeric complexes with LRFN1, LRFN2, LRFN3 and LRFN5. Unable to form homophilic interactions across cell junctions. Interacts with DLG1, DLG2, DLG3 and DLG4. In terms of processing, glycosylated.

It is found in the membrane. In terms of biological role, promotes neurite outgrowth in hippocampal neurons. May play a role in redistributing DLG4 to the cell periphery. The polypeptide is Leucine-rich repeat and fibronectin type-III domain-containing protein 4 (LRFN4) (Homo sapiens (Human)).